Here is a 596-residue protein sequence, read N- to C-terminus: Actin-histidine N-methyltransferase (596 aa).

S-adenosyl-L-methionine-binding positions include Arg-75, 104–106 (EGY), Arg-254, 275–279 (DMCNH), and 325–327 (NGF). The 221-residue stretch at 94 to 314 (DGFEISNFAD…EGEQIYIFYG (221 aa)) folds into the SET domain. The tract at residues 556–596 (QCKDLNGTQEDPPGGGAVVKEIEKHDPSAKRTEGEPKDAGK) is disordered. Positions 575–596 (KEIEKHDPSAKRTEGEPKDAGK) are enriched in basic and acidic residues.

Belongs to the class V-like SAM-binding methyltransferase superfamily. SETD3 actin-histidine methyltransferase family.

It is found in the cytoplasm. The catalysed reaction is L-histidyl-[protein] + S-adenosyl-L-methionine = N(tele)-methyl-L-histidyl-[protein] + S-adenosyl-L-homocysteine + H(+). In terms of biological role, protein-histidine N-methyltransferase that specifically mediates 3-methylhistidine (tele-methylhistidine) methylation of actin at 'His-73'. Does not have protein-lysine N-methyltransferase activity and probably only catalyzes histidine methylation of actin. This is Actin-histidine N-methyltransferase from Danio rerio (Zebrafish).